The following is a 434-amino-acid chain: Ribosomal protein uS12 methylthiotransferase RimO (434 aa).

One can recognise an MTTase N-terminal domain in the interval 6 to 122 (SKLYLLTLGC…IIAELGGHYK (117 aa)). [4Fe-4S] cluster contacts are provided by Cys-15, Cys-51, Cys-85, Cys-146, Cys-150, and Cys-153. One can recognise a Radical SAM core domain in the interval 132–361 (LTPPYFSYLK…MAAQEEIAYA (230 aa)). The TRAM domain maps to 364–434 (QALVGSFMPV…AFDLFGSLVL (71 aa)).

The protein belongs to the methylthiotransferase family. RimO subfamily. [4Fe-4S] cluster is required as a cofactor.

It localises to the cytoplasm. The enzyme catalyses L-aspartate(89)-[ribosomal protein uS12]-hydrogen + (sulfur carrier)-SH + AH2 + 2 S-adenosyl-L-methionine = 3-methylsulfanyl-L-aspartate(89)-[ribosomal protein uS12]-hydrogen + (sulfur carrier)-H + 5'-deoxyadenosine + L-methionine + A + S-adenosyl-L-homocysteine + 2 H(+). Functionally, catalyzes the methylthiolation of an aspartic acid residue of ribosomal protein uS12. The chain is Ribosomal protein uS12 methylthiotransferase RimO from Chloroherpeton thalassium (strain ATCC 35110 / GB-78).